Consider the following 356-residue polypeptide: Septin-2A (356 aa).

One can recognise a Septin-type G domain in the interval 33–305; that stretch reads KGFEFTLMVV…ENFRSERLKK (273 aa). The segment at 43–50 is G1 motif; it reads GESGLGKS. GTP contacts are provided by residues 43-50, threonine 77, glycine 103, 182-190, glycine 240, and arginine 255; these read GESGLGKS and KADTLTLRE. Positions 100–103 are G3 motif; that stretch reads DTPG. A G4 motif region spans residues 181–184; sequence AKAD. An important for dimerization region spans residues 259–269; it reads WGVVEVENTEH.

This sequence belongs to the TRAFAC class TrmE-Era-EngA-EngB-Septin-like GTPase superfamily. Septin GTPase family. As to quaternary structure, septins polymerize into heterooligomeric protein complexes that form filaments, and associate with cellular membranes, actin filaments and microtubules. GTPase activity is required for filament formation. Can form heterooligomers with other family members and form filaments. Interacts with wdpcp.

The protein resides in the cytoplasm. It is found in the cytoskeleton. Its subcellular location is the spindle. The protein localises to the cleavage furrow. It localises to the midbody. The protein resides in the cell projection. It is found in the cilium membrane. Filament-forming cytoskeletal GTPase. Required for normal organization of the actin cytoskeleton. Plays a role in the biogenesis of polarized columnar-shaped epithelium. Required for the progression through mitosis through regulation of chromosome congression. During anaphase, may be required for chromosome segregation and spindle elongation. Probably plays a role in ciliogenesis and collective cell movements including convergent extension during gastrulation. In cilia, required for the integrity of the diffusion barrier at the base of the primary cilium that prevents diffusion of transmembrane proteins between the cilia and plasma membranes. Controls cell shape and not polarization of cells during convergent extension. The chain is Septin-2A (sept2-a) from Xenopus laevis (African clawed frog).